A 156-amino-acid chain; its full sequence is 6,7-dimethyl-8-ribityllumazine synthase (156 aa).

Residues Phe-22, 57-59 (AYE), and 81-83 (SVI) each bind 5-amino-6-(D-ribitylamino)uracil. 86 to 87 (GT) is a (2S)-2-hydroxy-3-oxobutyl phosphate binding site. His-89 (proton donor) is an active-site residue. Phe-114 contributes to the 5-amino-6-(D-ribitylamino)uracil binding site. Residue Arg-128 participates in (2S)-2-hydroxy-3-oxobutyl phosphate binding.

Belongs to the DMRL synthase family. As to quaternary structure, forms an icosahedral capsid composed of 60 subunits, arranged as a dodecamer of pentamers.

It carries out the reaction (2S)-2-hydroxy-3-oxobutyl phosphate + 5-amino-6-(D-ribitylamino)uracil = 6,7-dimethyl-8-(1-D-ribityl)lumazine + phosphate + 2 H2O + H(+). It functions in the pathway cofactor biosynthesis; riboflavin biosynthesis; riboflavin from 2-hydroxy-3-oxobutyl phosphate and 5-amino-6-(D-ribitylamino)uracil: step 1/2. Functionally, catalyzes the formation of 6,7-dimethyl-8-ribityllumazine by condensation of 5-amino-6-(D-ribitylamino)uracil with 3,4-dihydroxy-2-butanone 4-phosphate. This is the penultimate step in the biosynthesis of riboflavin. This Photobacterium leiognathi protein is 6,7-dimethyl-8-ribityllumazine synthase.